A 252-amino-acid chain; its full sequence is Triosephosphate isomerase (252 aa).

9-11 (NWK) contacts substrate. The active-site Electrophile is the His-95. Catalysis depends on Glu-167, which acts as the Proton acceptor. Substrate is bound by residues Gly-173, Ser-211, and 232–233 (GG).

It belongs to the triosephosphate isomerase family. Homodimer.

The protein resides in the cytoplasm. It catalyses the reaction D-glyceraldehyde 3-phosphate = dihydroxyacetone phosphate. Its pathway is carbohydrate biosynthesis; gluconeogenesis. It functions in the pathway carbohydrate degradation; glycolysis; D-glyceraldehyde 3-phosphate from glycerone phosphate: step 1/1. Involved in the gluconeogenesis. Catalyzes stereospecifically the conversion of dihydroxyacetone phosphate (DHAP) to D-glyceraldehyde-3-phosphate (G3P). The polypeptide is Triosephosphate isomerase (Marinobacter nauticus (strain ATCC 700491 / DSM 11845 / VT8) (Marinobacter aquaeolei)).